Reading from the N-terminus, the 401-residue chain is Proline-rich protein 30 (401 aa).

Residues 69-80 (PGPHFSSDSNSD) show a composition bias toward polar residues. 3 disordered regions span residues 69–93 (PGPHFSSDSNSDFVPPHSSSHPRSS), 129–191 (SSSL…RGAG), and 357–401 (QSPK…KSPS). 2 stretches are compositionally biased toward low complexity: residues 83–93 (PPHSSSHPRSS) and 129–147 (SSSLSQLQHSSPHSCQSPS). Composition is skewed to polar residues over residues 148-186 (RLQDLQSPKITSPVPSSPSPRIQNNKQTWQWPQSGSIKS) and 357-368 (QSPKPSQCSRSL).

This is Proline-rich protein 30 (Prr30) from Mus musculus (Mouse).